Here is a 277-residue protein sequence, read N- to C-terminus: Mitochondrial outer membrane protein porin 5 (277 aa).

This sequence belongs to the eukaryotic mitochondrial porin (TC 1.B.8.1) family.

The protein resides in the mitochondrion outer membrane. In terms of biological role, forms a channel through the mitochondrial outer membrane that allows diffusion of small hydrophilic molecules. The channel adopts an open conformation at low or zero membrane potential and a closed conformation at potentials above 30-40 mV. The open state has a weak anion selectivity whereas the closed state is cation-selective. The sequence is that of Mitochondrial outer membrane protein porin 5 (VDAC5) from Oryza sativa subsp. japonica (Rice).